The sequence spans 509 residues: tRNA-2-methylthio-N(6)-dimethylallyladenosine synthase (509 aa).

Over residues 1-15 (MNEQQRLASQQVNSS) the composition is skewed to polar residues. The disordered stretch occupies residues 1-26 (MNEQQRLASQQVNSSTKKEEKDYSKY). Basic and acidic residues predominate over residues 16 to 25 (TKKEEKDYSK). In terms of domain architecture, MTTase N-terminal spans 66 to 184 (RKFYIRTYGC…LPYILKDAMF (119 aa)). Residues C75, C111, C145, C221, C225, and C228 each contribute to the [4Fe-4S] cluster site. The Radical SAM core domain maps to 207–437 (RRGDIKAWVN…NALVNKLAIE (231 aa)). The region spanning 440 to 503 (NRYKGQIVEV…TWSLNGELVE (64 aa)) is the TRAM domain.

The protein belongs to the methylthiotransferase family. MiaB subfamily. In terms of assembly, monomer. [4Fe-4S] cluster serves as cofactor.

The protein localises to the cytoplasm. It catalyses the reaction N(6)-dimethylallyladenosine(37) in tRNA + (sulfur carrier)-SH + AH2 + 2 S-adenosyl-L-methionine = 2-methylsulfanyl-N(6)-dimethylallyladenosine(37) in tRNA + (sulfur carrier)-H + 5'-deoxyadenosine + L-methionine + A + S-adenosyl-L-homocysteine + 2 H(+). Functionally, catalyzes the methylthiolation of N6-(dimethylallyl)adenosine (i(6)A), leading to the formation of 2-methylthio-N6-(dimethylallyl)adenosine (ms(2)i(6)A) at position 37 in tRNAs that read codons beginning with uridine. The protein is tRNA-2-methylthio-N(6)-dimethylallyladenosine synthase of Bacillus cereus (strain AH187).